Consider the following 86-residue polypeptide: Small ribosomal subunit protein uS17 (86 aa).

It belongs to the universal ribosomal protein uS17 family. In terms of assembly, part of the 30S ribosomal subunit.

One of the primary rRNA binding proteins, it binds specifically to the 5'-end of 16S ribosomal RNA. In Desulfitobacterium hafniense (strain DSM 10664 / DCB-2), this protein is Small ribosomal subunit protein uS17.